The primary structure comprises 89 residues: Small ribosomal subunit protein uS15 (89 aa).

Belongs to the universal ribosomal protein uS15 family. Part of the 30S ribosomal subunit. Forms a bridge to the 50S subunit in the 70S ribosome, contacting the 23S rRNA.

In terms of biological role, one of the primary rRNA binding proteins, it binds directly to 16S rRNA where it helps nucleate assembly of the platform of the 30S subunit by binding and bridging several RNA helices of the 16S rRNA. Forms an intersubunit bridge (bridge B4) with the 23S rRNA of the 50S subunit in the ribosome. The sequence is that of Small ribosomal subunit protein uS15 from Corynebacterium diphtheriae (strain ATCC 700971 / NCTC 13129 / Biotype gravis).